Consider the following 407-residue polypeptide: Putative colanic acid biosynthesis glycosyl transferase WcaI (407 aa).

It functions in the pathway slime biogenesis; slime polysaccharide biosynthesis. This is Putative colanic acid biosynthesis glycosyl transferase WcaI (wcaI) from Escherichia coli (strain K12).